The sequence spans 299 residues: Glutamyl-Q tRNA(Asp) synthetase (299 aa).

L-glutamate is bound by residues arginine 9–serine 13 and glutamate 45. Residues proline 12–serine 22 carry the 'HIGH' region motif. 3 residues coordinate Zn(2+): cysteine 101, cysteine 103, and cysteine 118. L-glutamate contacts are provided by tyrosine 170 and arginine 188. The 'KMSKS' region motif lies at lysine 226–serine 230. An ATP-binding site is contributed by lysine 229. The segment at glutamine 279–aspartate 299 is disordered. The segment covering arginine 285–aspartate 299 has biased composition (basic and acidic residues).

Belongs to the class-I aminoacyl-tRNA synthetase family. GluQ subfamily. Zn(2+) is required as a cofactor.

Catalyzes the tRNA-independent activation of glutamate in presence of ATP and the subsequent transfer of glutamate onto a tRNA(Asp). Glutamate is transferred on the 2-amino-5-(4,5-dihydroxy-2-cyclopenten-1-yl) moiety of the queuosine in the wobble position of the QUC anticodon. This chain is Glutamyl-Q tRNA(Asp) synthetase, found in Xanthomonas oryzae pv. oryzae (strain KACC10331 / KXO85).